The chain runs to 295 residues: Pyridoxal 5'-phosphate synthase subunit PdxS (295 aa).

A D-ribose 5-phosphate-binding site is contributed by Asp25. Lys82 acts as the Schiff-base intermediate with D-ribose 5-phosphate in catalysis. A D-ribose 5-phosphate-binding site is contributed by Gly154. Arg166 contacts D-glyceraldehyde 3-phosphate. D-ribose 5-phosphate contacts are provided by residues Gly215 and 236 to 237; that span reads GS.

It belongs to the PdxS/SNZ family. As to quaternary structure, in the presence of PdxT, forms a dodecamer of heterodimers.

The catalysed reaction is aldehydo-D-ribose 5-phosphate + D-glyceraldehyde 3-phosphate + L-glutamine = pyridoxal 5'-phosphate + L-glutamate + phosphate + 3 H2O + H(+). The protein operates within cofactor biosynthesis; pyridoxal 5'-phosphate biosynthesis. Its function is as follows. Catalyzes the formation of pyridoxal 5'-phosphate from ribose 5-phosphate (RBP), glyceraldehyde 3-phosphate (G3P) and ammonia. The ammonia is provided by the PdxT subunit. Can also use ribulose 5-phosphate and dihydroxyacetone phosphate as substrates, resulting from enzyme-catalyzed isomerization of RBP and G3P, respectively. The protein is Pyridoxal 5'-phosphate synthase subunit PdxS of Actinobacillus pleuropneumoniae serotype 3 (strain JL03).